A 154-amino-acid polypeptide reads, in one-letter code: Transcriptional repressor NrdR (154 aa).

The segment at 3–34 is a zinc-finger region; the sequence is CPFCGHSNTQVLDTRMSEDGDAVRRRRRCEAC. The region spanning 49 to 139 is the ATP-cone domain; it reads PAIVKKNGSR…VYRSFEDVAE (91 aa).

This sequence belongs to the NrdR family. Requires Zn(2+) as cofactor.

Functionally, negatively regulates transcription of bacterial ribonucleotide reductase nrd genes and operons by binding to NrdR-boxes. This is Transcriptional repressor NrdR from Cupriavidus pinatubonensis (strain JMP 134 / LMG 1197) (Cupriavidus necator (strain JMP 134)).